Consider the following 565-residue polypeptide: CTP synthase (565 aa).

The amidoligase domain stretch occupies residues 1 to 272 (MARPKNVKHI…DLRVMKKLGL (272 aa)). Ser18 lines the CTP pocket. Ser18 is a binding site for UTP. 19 to 24 (SLGKGI) lines the ATP pocket. Tyr59 provides a ligand contact to L-glutamine. Residue Asp76 participates in ATP binding. Mg(2+) is bound by residues Asp76 and Glu146. CTP contacts are provided by residues 153–155 (DIE), 193–198 (KTKPTQ), and Lys229. UTP-binding positions include 193-198 (KTKPTQ) and Lys229. The 245-residue stretch at 299–543 (TIGVCGKYTE…VAAAKEYEKG (245 aa)) folds into the Glutamine amidotransferase type-1 domain. Position 363 (Gly363) interacts with L-glutamine. The active-site Nucleophile; for glutamine hydrolysis is Cys390. Residues 391-394 (LGMQ), Glu414, and Arg471 contribute to the L-glutamine site. Catalysis depends on residues His516 and Glu518.

This sequence belongs to the CTP synthase family. As to quaternary structure, homotetramer.

The enzyme catalyses UTP + L-glutamine + ATP + H2O = CTP + L-glutamate + ADP + phosphate + 2 H(+). The catalysed reaction is L-glutamine + H2O = L-glutamate + NH4(+). It carries out the reaction UTP + NH4(+) + ATP = CTP + ADP + phosphate + 2 H(+). The protein operates within pyrimidine metabolism; CTP biosynthesis via de novo pathway; CTP from UDP: step 2/2. Its activity is regulated as follows. Allosterically activated by GTP, when glutamine is the substrate; GTP has no effect on the reaction when ammonia is the substrate. The allosteric effector GTP functions by stabilizing the protein conformation that binds the tetrahedral intermediate(s) formed during glutamine hydrolysis. Inhibited by the product CTP, via allosteric rather than competitive inhibition. Its function is as follows. Catalyzes the ATP-dependent amination of UTP to CTP with either L-glutamine or ammonia as the source of nitrogen. Regulates intracellular CTP levels through interactions with the four ribonucleotide triphosphates. This Chlorobium phaeobacteroides (strain DSM 266 / SMG 266 / 2430) protein is CTP synthase.